We begin with the raw amino-acid sequence, 172 residues long: Ribosome maturation factor RimM (172 aa).

Positions 96–169 (EGYFYHFQLQ…RMEIKLLPGL (74 aa)) constitute a PRC barrel domain.

Belongs to the RimM family. As to quaternary structure, binds ribosomal protein uS19.

It is found in the cytoplasm. Its function is as follows. An accessory protein needed during the final step in the assembly of 30S ribosomal subunit, possibly for assembly of the head region. Essential for efficient processing of 16S rRNA. May be needed both before and after RbfA during the maturation of 16S rRNA. It has affinity for free ribosomal 30S subunits but not for 70S ribosomes. This is Ribosome maturation factor RimM from Syntrophomonas wolfei subsp. wolfei (strain DSM 2245B / Goettingen).